Consider the following 315-residue polypeptide: Ribosomal RNA small subunit methyltransferase H (315 aa).

S-adenosyl-L-methionine contacts are provided by residues 37–39, Asp57, Phe83, Asp105, and Gln112; that span reads GGH. A disordered region spans residues 296-315; the sequence is EVKANPRSRSAVMRVAEKVR.

It belongs to the methyltransferase superfamily. RsmH family.

It localises to the cytoplasm. The enzyme catalyses cytidine(1402) in 16S rRNA + S-adenosyl-L-methionine = N(4)-methylcytidine(1402) in 16S rRNA + S-adenosyl-L-homocysteine + H(+). Functionally, specifically methylates the N4 position of cytidine in position 1402 (C1402) of 16S rRNA. In Stutzerimonas stutzeri (strain A1501) (Pseudomonas stutzeri), this protein is Ribosomal RNA small subunit methyltransferase H.